A 552-amino-acid polypeptide reads, in one-letter code: Probable protein kinase UbiB (552 aa).

The Protein kinase domain maps to 121 to 504 (HFDTVPLASA…QGLQRRVVNA (384 aa)). ATP-binding positions include 127 to 135 (LASASISQV) and Lys149. The Proton acceptor role is filled by Asp284. Transmembrane regions (helical) follow at residues 501-521 (VVNA…YGLH) and 526-546 (YLGA…LALF).

Belongs to the ABC1 family. UbiB subfamily.

The protein resides in the cell inner membrane. The protein operates within cofactor biosynthesis; ubiquinone biosynthesis [regulation]. Functionally, is probably a protein kinase regulator of UbiI activity which is involved in aerobic coenzyme Q (ubiquinone) biosynthesis. This is Probable protein kinase UbiB from Xylella fastidiosa (strain 9a5c).